A 256-amino-acid chain; its full sequence is Ribosomal RNA small subunit methyltransferase J (256 aa).

S-adenosyl-L-methionine-binding positions include Arg-101 to Asp-102, Glu-117 to Arg-118, Ser-153 to Ser-154, and Asp-176.

The protein belongs to the methyltransferase superfamily. RsmJ family.

The protein resides in the cytoplasm. The catalysed reaction is guanosine(1516) in 16S rRNA + S-adenosyl-L-methionine = N(2)-methylguanosine(1516) in 16S rRNA + S-adenosyl-L-homocysteine + H(+). Functionally, specifically methylates the guanosine in position 1516 of 16S rRNA. The protein is Ribosomal RNA small subunit methyltransferase J of Photobacterium profundum (strain SS9).